A 78-amino-acid polypeptide reads, in one-letter code: Large ribosomal subunit protein bL28 (78 aa).

Belongs to the bacterial ribosomal protein bL28 family.

The chain is Large ribosomal subunit protein bL28 from Nostoc sp. (strain PCC 7120 / SAG 25.82 / UTEX 2576).